Consider the following 1052-residue polypeptide: MQVMPPTPGGGPSRLFILRPVATTLFMIAILLAGIIGYRALPVSALPEVDYPTIQVVTLYPGASPDVVTSSITAPLERQFGQMSGLKQMASQSSGGASVITLQFQLTLPLDVAEQEVQAAINAATNLLPSDLPYPPIYNKVNPADPPILTLAVTATAIPMTQVEDMVETRIAQKISQVTGVGLVTLSGGQRPAVRVKLNAPAVAALGLDSETIRTAISNANVNSAKGSLDGPTRSVTLSANDQMKSAEEYRDLIIAYQNGAPIRLQDVATIEQGAENNKLAAWANTQSAIVLNIQRQPGVNVIATADSIREMLPELIKSLPKSVDVKVLTDRTSTIRASVNDVQFELLLAIALVVMVIYLFLRNAAATIIPSIAVPLSLVGTFAAMYFLGFSINNLTLMALTIATGFVVDDAIVVIENISRYIEKGEKPLDAALKGAGEIGFTIISLTFSLIAVLIPLLFMEDIVGRLFREFAVTLAVAILISAVVSLTLTPMMCARMLSYESLRKQNRLSRASEKFFDWVIAHYAVALKKVLNHPWLTLSVAFSTLVLTVILYLLIPKGFFPLQDNGLIQGTLEAPQSVSFSNMAERQQQVAAIILKDPAVESLTSFVGVDGTNATLNNGRLQINLKPLSERDDRIPQIITRLQESVSGVPGIKLYLQPVQDLTIDTQLSRTQYQFTLQATSLEELSTWVPKLVNELQQKAPFQDVTSDWQDQGLVAFVNVDRDSASRLGITMAAIDNALYNAFGQRLISTIYTQSNQYRVVLEHDVQATPGLAAFNDIRLTGIDGKGVPLSSIATIEERFGPLSINHLNQFPSATVSFNLAQGYSLGEAVAAVTLAEKEIQLPADITTRFQGSTLAFQAALGSTLWLIIAAIVAMYIVLGVLYESFIHPITILSTLPTAGVGALLALMLTGNELDVIAIIGIILLIGIVKKNAIMMIDFALAAERDQGMTPYDAIYQACLLRFRPILMTTLAALFGALPLMLSTGVGAELRQPLGVCMVGGLIVSQVLTLFTTPVIYLLFDKLARNTRGKNRHRDEDIDSSELLNGQEPQ.

The next 11 membrane-spanning stretches (helical) occupy residues 15 to 37 (LFIL…GIIG), 345 to 362 (FELL…YLFL), 367 to 389 (ATII…MYFL), 396 to 418 (LTLM…VIEN), 438 to 460 (GEIG…PLLF), 472 to 494 (FAVT…TPMM), 535 to 557 (HPWL…YLLI), 867 to 889 (LWLI…ESFI), 909 to 931 (LMLT…IGIV), 968 to 990 (ILMT…GVGA), and 1000 to 1022 (MVGG…YLLF). A disordered region spans residues 1032-1052 (KNRHRDEDIDSSELLNGQEPQ).

Belongs to the resistance-nodulation-cell division (RND) (TC 2.A.6) family. MdtB subfamily. As to quaternary structure, part of a tripartite efflux system composed of MdtA, MdtB and MdtC. MdtB forms a heteromultimer with MdtC.

It is found in the cell inner membrane. This is Multidrug resistance protein MdtB from Yersinia pestis.